We begin with the raw amino-acid sequence, 616 residues long: Pentatricopeptide repeat-containing protein At4g15720 (616 aa).

PPR repeat units lie at residues 63-93 (DTFT…MCEP), 94-128 (NVVS…RPVP), 130-164 (NEYT…GLRR), 165-199 (NIVV…GRNV), 200-228 (VSWT…FNAA), 235-269 (NQFM…GYES), 270-300 (NTVV…IRCH), 301-335 (SVIS…RINP), 336-371 (NYVT…GVVP), and 372-402 (DSRH…IEVG). Residues 409 to 484 (LWGALLSAGR…ERACSWIENK (76 aa)) form a type E motif region. Residues 485-515 (DSVYVFHAGDLSCDESGEIERFLKDLEKRMK) are type E(+) motif. The segment at 522-616 (SSSMITTSSS…NGSCTCRDYW (95 aa)) is type DYW motif.

The protein belongs to the PPR family. PCMP-H subfamily.

The sequence is that of Pentatricopeptide repeat-containing protein At4g15720 (PCMP-H1) from Arabidopsis thaliana (Mouse-ear cress).